The following is a 340-amino-acid chain: Phosphoribosylformylglycinamidine cyclo-ligase (340 aa).

Belongs to the AIR synthase family.

The protein resides in the cytoplasm. The enzyme catalyses 2-formamido-N(1)-(5-O-phospho-beta-D-ribosyl)acetamidine + ATP = 5-amino-1-(5-phospho-beta-D-ribosyl)imidazole + ADP + phosphate + H(+). It participates in purine metabolism; IMP biosynthesis via de novo pathway; 5-amino-1-(5-phospho-D-ribosyl)imidazole from N(2)-formyl-N(1)-(5-phospho-D-ribosyl)glycinamide: step 2/2. The chain is Phosphoribosylformylglycinamidine cyclo-ligase from Streptococcus pneumoniae (strain CGSP14).